A 581-amino-acid chain; its full sequence is Nicotinic acid-CoA ligase pyr1 (581 aa).

Position 204-215 (204-215) interacts with AMP; sequence MFLTSGTSGLPK. Residues 477 to 555 are AMP-binding; sequence EIEGILLKDP…DEIPRTGIGK (79 aa).

Belongs to the ATP-dependent AMP-binding enzyme family.

It carries out the reaction nicotinate + ATP + CoA = nicotinyl-CoA + AMP + diphosphate. It participates in secondary metabolite biosynthesis; terpenoid biosynthesis. Nicotinic acid-CoA ligase; part of the gene cluster that mediates the biosynthesis of pyripyropene A, a specific human acyl-coenzyme A:cholesterol acyltransferase 2 inhibitor. The first step of the pathway is the synthesis of nicotinyl-CoA from nicotinic acid by the nicotinic acid-CoA ligase pyr1. Nicotinyl-CoA is then a substrate of polyketide synthase pyr2 to produce 4-hydroxy-6-(3-pyridinyl)-2H-pyran-2-one (HPPO) which is further prenylated by the polyprenyl transferase pyr6 to yield farnesyl-HPPO. The next steps consist of an epoxidation of farnesyl-HPPO to epoxyfarnesyl-HPPO by FAD-dependent monooxygenase pyr5 and a cyclization of the terpenoid portion by the terpene cyclase pyr4 to yield deacetyl-pyripyropene E. The 2 cytochrome P450 monooxygenases pyr3 and pyr9, and the 2 acetyltransferases pyr7 and pyr8 are involved in the conversion of deacetyl-pyripyropene E into pyripyropene A through several cycles of oxidation and acetylation steps. Pyr7 acetylates deacetyl-pyripyropene E to pyripyropene E which is oxidized to 11-deacetyl-pyripyropene O by pyr3, which is in turn acetylated into pyripyropene O by pyr8. Pyripyropene O is then oxidized to deacetyl-pyripyropene A by pyr9. Deacetyl-pyripyropene A is finally acetylated to pyripyropene A by pyr8. The chain is Nicotinic acid-CoA ligase pyr1 from Aspergillus fumigatus (strain ATCC MYA-4609 / CBS 101355 / FGSC A1100 / Af293) (Neosartorya fumigata).